A 79-amino-acid polypeptide reads, in one-letter code: Cyclin-dependent kinases regulatory subunit 2 (79 aa).

This sequence belongs to the CKS family. As to quaternary structure, forms a homohexamer that can probably bind six kinase subunits.

Its function is as follows. Binds to the catalytic subunit of the cyclin dependent kinases and is essential for their biological function. This Xenopus laevis (African clawed frog) protein is Cyclin-dependent kinases regulatory subunit 2 (cks2).